The sequence spans 813 residues: Striatin-interacting protein 1 homolog (813 aa).

Disordered stretches follow at residues 1–41 and 307–379; these read MDGV…SEAP and RAAS…RDEV. Residues 9-18 are compositionally biased toward polar residues; the sequence is NNKQKQNQML. The span at 22-35 shows a compositional bias: basic and acidic residues; sequence MRGEFTRNQRKDSE. Residues 307 to 316 show a composition bias toward low complexity; it reads RAASPPASAS. A Phosphoserine modification is found at S310. The segment covering 331-352 has biased composition (basic and acidic residues); the sequence is KALIKQDNLDTFNEKDPYKADD. Acidic residues predominate over residues 353 to 367; the sequence is SHEDEEENDDNDNSL.

The protein belongs to the STRIP family. Part of the core of STRIPAK complexes composed of PP2A catalytic and scaffolding subunits, the striatins (PP2A regulatory subunits), the striatin-associated proteins MOB4, STRIP1 and STRIP2, PDCD10 and members of the STE20 kinases, such as STK24 and STK26.

Its subcellular location is the cytoplasm. Its function is as follows. Plays a role in the regulation of cell morphology and cytoskeletal organization. Required in the cortical actin filament dynamics and cell shape. Part of the striatin-interacting phosphatase and kinase (STRIPAK) complexes. STRIPAK complexes have critical roles in protein (de)phosphorylation and are regulators of multiple signaling pathways including Hippo, MAPK, nuclear receptor and cytoskeleton remodeling. Different types of STRIPAK complexes are involved in a variety of biological processes such as cell growth, differentiation, apoptosis, metabolism and immune regulation. This chain is Striatin-interacting protein 1 homolog (strip1), found in Danio rerio (Zebrafish).